Consider the following 704-residue polypeptide: MHTFFIAPTGFGVGLTSISLGLLRALERAGLKVGFFKPIAQLHPGDLGPERSSELVARTHGLDTPKPLPLAQVERMLGDGQLDELLEEIISLYQRAAADKDVVIVEGMVPTRHASYAARVNFHLAKSLDAEVILVSAPENETLTELTDRIEIQAQLFGGPRDPKVLGVILNKVRGEADAANAEDGVADFARRLTEHSPLLRDDFRLIGCIPWQDELNAARTRDIADLLSARVINAGDYEQRRVQKIVLCARAVPNTVQLLKPGVLVVTPGDRDDIILAASLAAMNGVPLAGLLLCSDFPPDPRIMELCRGALQGGLPVLSVATGSYDTATNLNRMNKEIPVDDRERAERVTEFVAGHIDFEWLKQRCGTPRELRLSPPAFRYQVVQRAQKAGKRIVLPEGSEPRTVQAAAICQARGIARCVLLAKPEEVQAVAQAQGIVLPEGLEIIDPDLVRQRYVEPMVELRKGKGLNAPMAEQQLEDSVVLATMMLALDEVDGLVSGAIHTTASTIRPALQLIKTAPGYNLVSSVFFMLLPDQVLVYGDCAVNPDPSASDLAEIAVQSAASAQAFGIPARVAMISYSTGDSGSGVDVDKVREATRLAREQRPDLLIDGPLQYDAAAIASVGRQKAPNSPVAGQATVFIFPDLNTGNTTYKAVQRSADCVSVGPMLQGLRKPVNDLSRGALVEDIVYTIALTAIQADAQAPA.

The interval 379 to 704 (AFRYQVVQRA…AIQADAQAPA (326 aa)) is phosphate acetyltransferase.

In the N-terminal section; belongs to the CobB/CobQ family. The protein in the C-terminal section; belongs to the phosphate acetyltransferase and butyryltransferase family. Homohexamer.

The protein resides in the cytoplasm. The catalysed reaction is acetyl-CoA + phosphate = acetyl phosphate + CoA. It functions in the pathway metabolic intermediate biosynthesis; acetyl-CoA biosynthesis; acetyl-CoA from acetate: step 2/2. Its activity is regulated as follows. Activity is increased under anaerobic growth conditions. Involved in acetate metabolism. In combination with LdhA and AckA, allows fermentation of pyruvate, enhancing long-term survival under anaerobic conditions. The protein is Phosphate acetyltransferase (pta) of Pseudomonas aeruginosa (strain ATCC 15692 / DSM 22644 / CIP 104116 / JCM 14847 / LMG 12228 / 1C / PRS 101 / PAO1).